Reading from the N-terminus, the 216-residue chain is Transmembrane protein 186 (216 aa).

At 1-68 (MAFLLRAVPR…IYRFNAIRAL (68 aa)) the chain is on the mitochondrial matrix side. The helical transmembrane segment at 69-91 (GFLSRLKLAQTAVTVVALPPGFY) threads the bilayer. Over 92-103 (CYSQGLMTLSSL) the chain is Mitochondrial intermembrane. A helical membrane pass occupies residues 104-124 (GLMSGIASFALVMLCWMSHFF). The Mitochondrial matrix portion of the chain corresponds to 125 to 216 (RRLVGILYVN…GTLATLKNSK (92 aa)).

Belongs to the TMEM186 family. As to quaternary structure, part of the mitochondrial complex I assembly/MCIA complex that comprises at least the core subunits TMEM126B, NDUFAF1, ECSIT and ACAD9 and complement subunits such as COA1 and TMEM186. Interacts with MT-ND3.

It is found in the mitochondrion inner membrane. Its function is as follows. As part of the MCIA complex, required for efficient assembly of the mitochondrial complex I. The chain is Transmembrane protein 186 from Rattus norvegicus (Rat).